The primary structure comprises 198 residues: NADH-quinone oxidoreductase subunit C (198 aa).

It belongs to the complex I 30 kDa subunit family. In terms of assembly, NDH-1 is composed of 14 different subunits. Subunits NuoB, C, D, E, F, and G constitute the peripheral sector of the complex.

The protein localises to the cell inner membrane. It catalyses the reaction a quinone + NADH + 5 H(+)(in) = a quinol + NAD(+) + 4 H(+)(out). Functionally, NDH-1 shuttles electrons from NADH, via FMN and iron-sulfur (Fe-S) centers, to quinones in the respiratory chain. The immediate electron acceptor for the enzyme in this species is believed to be ubiquinone. Couples the redox reaction to proton translocation (for every two electrons transferred, four hydrogen ions are translocated across the cytoplasmic membrane), and thus conserves the redox energy in a proton gradient. The sequence is that of NADH-quinone oxidoreductase subunit C from Janthinobacterium sp. (strain Marseille) (Minibacterium massiliensis).